Reading from the N-terminus, the 209-residue chain is Ribosomal RNA large subunit methyltransferase E (209 aa).

Residues G63, W65, D83, D99, and D124 each contribute to the S-adenosyl-L-methionine site. K164 (proton acceptor) is an active-site residue. In terms of domain architecture, TRAM spans 191–209 (EASRGRSREVYIVATGYKG).

The protein belongs to the class I-like SAM-binding methyltransferase superfamily. RNA methyltransferase RlmE family.

It localises to the cytoplasm. It carries out the reaction uridine(2552) in 23S rRNA + S-adenosyl-L-methionine = 2'-O-methyluridine(2552) in 23S rRNA + S-adenosyl-L-homocysteine + H(+). In terms of biological role, specifically methylates the uridine in position 2552 of 23S rRNA at the 2'-O position of the ribose in the fully assembled 50S ribosomal subunit. The protein is Ribosomal RNA large subunit methyltransferase E of Haemophilus influenzae (strain 86-028NP).